Consider the following 56-residue polypeptide: Large ribosomal subunit protein bL33 (56 aa).

Residues M1–L12 show a composition bias toward basic and acidic residues. The disordered stretch occupies residues M1 to K28. The segment covering T15–T25 has biased composition (polar residues).

This sequence belongs to the bacterial ribosomal protein bL33 family.

This is Large ribosomal subunit protein bL33 from Cupriavidus necator (strain ATCC 17699 / DSM 428 / KCTC 22496 / NCIMB 10442 / H16 / Stanier 337) (Ralstonia eutropha).